The primary structure comprises 179 residues: Cell division protein ZapC (179 aa).

It belongs to the ZapC family. As to quaternary structure, interacts directly with FtsZ.

The protein resides in the cytoplasm. Its function is as follows. Contributes to the efficiency of the cell division process by stabilizing the polymeric form of the cell division protein FtsZ. Acts by promoting interactions between FtsZ protofilaments and suppressing the GTPase activity of FtsZ. The sequence is that of Cell division protein ZapC from Aliivibrio salmonicida (strain LFI1238) (Vibrio salmonicida (strain LFI1238)).